The chain runs to 722 residues: MEKNGNNRKLRVCVATCNRADYSKLAPIMFGIKTEPAFFELDVVVLGSHLIDDYGNTYRMIEQDDFDINTRLHTIVRGEDEAAMVESVGLALVKLPDVLNRLKPDIMIVHGDRFDALALATSAALMNIRILHIEGGEVSGTIDDSIRHAITKLAHYHVCCTRSAEQHLISMCEDHDRILLAGCPSYDKLLSAKNKDYMSIIRMWLGDDVKCKDYIVALQHPVTTDIKHSIKMFELTLDALISFNKRTLVLFPNIDAGSKEMVRVMRKKGIEHHPNFRAVKHVPFDQFIQLVAHAGCMIGNSSCGVREVGAFGTPVINLGTRQIGRETGENVLHVRDADTQDKILQALHLQFGKQYPCSKIYGDGNAVPRILKFLKSIDLQEPLQKKFCFPPVKENISQDIDHILETLSALAVDLGGTNLRVAIVSMKGEIVKKYTQFNPKTYEERISLILQMCVEAAAEAVKLNCRILGVGISTGGRVNPQEGIVLHSTKLIQEWNSVDLRTPLSDTLHLPVWVDNDGNCAAMAERKFGQGKGQENFVTLITGTGIGGGIIHQHELIHGSSFCAAELGHLVVSLDGPDCSCGSHGCIEAYASGMALQREAKKLHDEDLLLVEGMSVPKDEPVGALHLIQAAKLGNVKAQNILRTAGTALGLGVVNILHTMDPSLVILSGVLASHYIHIVKDVIRQQASSSVQDVDVVVSDLVDPALLGAASMVLDYTTRRIH.

5 residues coordinate UDP: R19, S23, R113, H220, and N253. Positions 259, 271, 280, and 281 each coordinate CMP-N-acetyl-beta-neuraminate. UDP-binding residues include V282, S301, S302, E307, and R321. The N-acetylmannosamine kinase stretch occupies residues 406 to 722 (TLSALAVDLG…VLDYTTRRIH (317 aa)). Residue D413 coordinates Mg(2+). G416 contributes to the an N-acyl-D-mannosamine 6-phosphate binding site. T417, N418, and R420 together coordinate ADP. 6 residues coordinate an N-acyl-D-mannosamine 6-phosphate: G476, R477, T489, N516, D517, and G545. An N-acyl-D-mannosamine-binding residues include G476, R477, T489, N516, and D517. D517 is an active-site residue. E566 and H569 together coordinate an N-acyl-D-mannosamine. H569 contacts an N-acyl-D-mannosamine 6-phosphate. Residues H569, C579, C581, and C586 each coordinate Zn(2+). An N-acyl-D-mannosamine 6-phosphate is bound at residue E588. E588 is an an N-acyl-D-mannosamine binding site.

The protein in the N-terminal section; belongs to the UDP-N-acetylglucosamine 2-epimerase family. In the C-terminal section; belongs to the ROK (NagC/XylR) family. Homodimer. Homotetramer. Homohexamer. The hexameric form exhibits both enzyme activities, whereas the dimeric form only catalyzes the phosphorylation of N-acyl-D-mannosamine. In terms of processing, phosphorylated. Phosphorylation by PKC activates the UDP-N-acetylglucosamine 2-epimerase activity.

The protein resides in the cytoplasm. The protein localises to the cytosol. The enzyme catalyses UDP-N-acetyl-alpha-D-glucosamine + H2O = aldehydo-N-acetyl-D-mannosamine + UDP + H(+). It carries out the reaction an N-acyl-D-mannosamine + ATP = an N-acyl-D-mannosamine 6-phosphate + ADP + H(+). The protein operates within amino-sugar metabolism; N-acetylneuraminate biosynthesis. Its activity is regulated as follows. The UDP-N-acetylglucosamine 2-epimerase activity, in contrast to the N-acetylmannosamine kinase activity, exhibits allosteric regulation by cytidine monophosphate-N-acetylneuraminic acid (CMP-Neu5Ac), the end product of neuraminic acid biosynthesis. Moreover, the activity is contingent upon the oligomeric state of the enzyme. The monomeric form is inactive, while the dimeric form selectively catalyzes the phosphorylation of N-acetylmannosamine. The hexameric form, on the other hand, demonstrates full proficiency in both enzyme activities. Furthermore, the UDP-N-acetylglucosamine 2-epimerase activity is increased by PKC-mediated phosphorylation. In terms of biological role, bifunctional enzyme that possesses both UDP-N-acetylglucosamine 2-epimerase and N-acetylmannosamine kinase activities, and serves as the initiator of the biosynthetic pathway leading to the production of N-acetylneuraminic acid (NeuAc), a critical precursor in the synthesis of sialic acids. By catalyzing this pivotal and rate-limiting step in sialic acid biosynthesis, this enzyme assumes a pivotal role in governing the regulation of cell surface sialylation, playing a role in embryonic angiogenesis. Sialic acids represent a category of negatively charged sugars that reside on the surface of cells as terminal components of glycoconjugates and mediate important functions in various cellular processes, including cell adhesion, signal transduction, and cellular recognition. This Cricetulus griseus (Chinese hamster) protein is Bifunctional UDP-N-acetylglucosamine 2-epimerase/N-acetylmannosamine kinase (GNE).